A 237-amino-acid polypeptide reads, in one-letter code: Leucyl/phenylalanyl-tRNA--protein transferase (237 aa).

The protein belongs to the L/F-transferase family.

The protein resides in the cytoplasm. It catalyses the reaction N-terminal L-lysyl-[protein] + L-leucyl-tRNA(Leu) = N-terminal L-leucyl-L-lysyl-[protein] + tRNA(Leu) + H(+). It carries out the reaction N-terminal L-arginyl-[protein] + L-leucyl-tRNA(Leu) = N-terminal L-leucyl-L-arginyl-[protein] + tRNA(Leu) + H(+). The enzyme catalyses L-phenylalanyl-tRNA(Phe) + an N-terminal L-alpha-aminoacyl-[protein] = an N-terminal L-phenylalanyl-L-alpha-aminoacyl-[protein] + tRNA(Phe). Functions in the N-end rule pathway of protein degradation where it conjugates Leu, Phe and, less efficiently, Met from aminoacyl-tRNAs to the N-termini of proteins containing an N-terminal arginine or lysine. This Vibrio vulnificus (strain CMCP6) protein is Leucyl/phenylalanyl-tRNA--protein transferase (aat).